A 501-amino-acid polypeptide reads, in one-letter code: Myosin heavy chain, embryonic smooth muscle isoform (501 aa).

Residues 1-457 (REAREKETKA…TLKNRLRRGG (457 aa)) adopt a coiled-coil conformation. Residues 1-501 (REAREKETKA…VNETQPPQSE (501 aa)) are rodlike tail (S2 and LMM domains). Disordered regions lie at residues 182-202 (YQRELEEARGSRDEIFAQSKE), 221-254 (LASSERARRHAEQERDELADEIANSASGKSALLD), and 397-501 (MEKA…PQSE). Residues 223–233 (SSERARRHAEQ) are compositionally biased toward basic and acidic residues. A compositionally biased stretch (polar residues) spans 492–501 (VNETQPPQSE).

Muscle myosin is a hexameric protein that consists of 2 heavy chain subunits (MHC), 2 alkali light chain subunits (MLC) and 2 regulatory light chain subunits (MLC-2).

It localises to the cytoplasm. Its subcellular location is the myofibril. In terms of biological role, muscle contraction. This Oryctolagus cuniculus (Rabbit) protein is Myosin heavy chain, embryonic smooth muscle isoform.